Consider the following 435-residue polypeptide: Serine--tRNA ligase (435 aa).

242 to 244 (TAE) contributes to the L-serine binding site. 273–275 (RSE) is a binding site for ATP. E296 contributes to the L-serine binding site. Position 360 to 363 (360 to 363 (EISS)) interacts with ATP. S396 contributes to the L-serine binding site.

Belongs to the class-II aminoacyl-tRNA synthetase family. Type-1 seryl-tRNA synthetase subfamily. In terms of assembly, homodimer. The tRNA molecule binds across the dimer.

Its subcellular location is the cytoplasm. The enzyme catalyses tRNA(Ser) + L-serine + ATP = L-seryl-tRNA(Ser) + AMP + diphosphate + H(+). It catalyses the reaction tRNA(Sec) + L-serine + ATP = L-seryl-tRNA(Sec) + AMP + diphosphate + H(+). The protein operates within aminoacyl-tRNA biosynthesis; selenocysteinyl-tRNA(Sec) biosynthesis; L-seryl-tRNA(Sec) from L-serine and tRNA(Sec): step 1/1. In terms of biological role, catalyzes the attachment of serine to tRNA(Ser). Is also able to aminoacylate tRNA(Sec) with serine, to form the misacylated tRNA L-seryl-tRNA(Sec), which will be further converted into selenocysteinyl-tRNA(Sec). The protein is Serine--tRNA ligase of Vibrio cholerae serotype O1 (strain ATCC 39541 / Classical Ogawa 395 / O395).